The primary structure comprises 200 residues: Probable molybdenum cofactor guanylyltransferase (200 aa).

GTP is bound by residues 9 to 11, lysine 21, aspartate 69, and aspartate 100; that span reads LAG. Aspartate 100 serves as a coordination point for Mg(2+).

The protein belongs to the MobA family. Mg(2+) serves as cofactor.

Its subcellular location is the cytoplasm. It carries out the reaction Mo-molybdopterin + GTP + H(+) = Mo-molybdopterin guanine dinucleotide + diphosphate. In terms of biological role, transfers a GMP moiety from GTP to Mo-molybdopterin (Mo-MPT) cofactor (Moco or molybdenum cofactor) to form Mo-molybdopterin guanine dinucleotide (Mo-MGD) cofactor. This is Probable molybdenum cofactor guanylyltransferase from Bacillus cereus (strain ZK / E33L).